Reading from the N-terminus, the 902-residue chain is Alanine--tRNA ligase (902 aa).

4 residues coordinate Zn(2+): H567, H571, C671, and H675.

It belongs to the class-II aminoacyl-tRNA synthetase family. It depends on Zn(2+) as a cofactor.

Its subcellular location is the cytoplasm. It catalyses the reaction tRNA(Ala) + L-alanine + ATP = L-alanyl-tRNA(Ala) + AMP + diphosphate. Catalyzes the attachment of alanine to tRNA(Ala) in a two-step reaction: alanine is first activated by ATP to form Ala-AMP and then transferred to the acceptor end of tRNA(Ala). Also edits incorrectly charged Ser-tRNA(Ala) and Gly-tRNA(Ala) via its editing domain. This Mycoplasmoides gallisepticum (strain R(low / passage 15 / clone 2)) (Mycoplasma gallisepticum) protein is Alanine--tRNA ligase.